We begin with the raw amino-acid sequence, 72 residues long: SRY-related protein MG42 (72 aa).

Positions 1–69 form a DNA-binding region, HMG box; sequence VKRPMNAFMV…KHMADYPNYK (69 aa).

The protein localises to the nucleus. The protein is SRY-related protein MG42 of Tarentola mauritanica (Common wall gecko).